The primary structure comprises 658 residues: UvrABC system protein B (658 aa).

Positions 25 to 178 (KSLKNKNHYQ…KSFLLKLVEM (154 aa)) constitute a Helicase ATP-binding domain. Residue 38–45 (GVTGSGKT) coordinates ATP. The Beta-hairpin motif lies at 91–114 (HFDYYQPESYIPRRDLFIEKDSSI). The Helicase C-terminal domain maps to 433-607 (QVQDLFDEIK…ELKLRDDETK (175 aa)). Residues 623-658 (EKIIKELDKKMRECAKNLDFEEAMHLRDEIAKLRTL) form the UVR domain.

The protein belongs to the UvrB family. Forms a heterotetramer with UvrA during the search for lesions. Interacts with UvrC in an incision complex.

It is found in the cytoplasm. The UvrABC repair system catalyzes the recognition and processing of DNA lesions. A damage recognition complex composed of 2 UvrA and 2 UvrB subunits scans DNA for abnormalities. Upon binding of the UvrA(2)B(2) complex to a putative damaged site, the DNA wraps around one UvrB monomer. DNA wrap is dependent on ATP binding by UvrB and probably causes local melting of the DNA helix, facilitating insertion of UvrB beta-hairpin between the DNA strands. Then UvrB probes one DNA strand for the presence of a lesion. If a lesion is found the UvrA subunits dissociate and the UvrB-DNA preincision complex is formed. This complex is subsequently bound by UvrC and the second UvrB is released. If no lesion is found, the DNA wraps around the other UvrB subunit that will check the other stand for damage. The sequence is that of UvrABC system protein B from Helicobacter acinonychis (strain Sheeba).